A 131-amino-acid chain; its full sequence is Ribosome-binding factor A (131 aa).

Belongs to the RbfA family. In terms of assembly, monomer. Binds 30S ribosomal subunits, but not 50S ribosomal subunits or 70S ribosomes.

It is found in the cytoplasm. Functionally, one of several proteins that assist in the late maturation steps of the functional core of the 30S ribosomal subunit. Associates with free 30S ribosomal subunits (but not with 30S subunits that are part of 70S ribosomes or polysomes). Required for efficient processing of 16S rRNA. May interact with the 5'-terminal helix region of 16S rRNA. The polypeptide is Ribosome-binding factor A (Chromohalobacter salexigens (strain ATCC BAA-138 / DSM 3043 / CIP 106854 / NCIMB 13768 / 1H11)).